The sequence spans 232 residues: Phosphatidylserine decarboxylase proenzyme (232 aa).

Catalysis depends on Ser190, which acts as the Schiff-base intermediate with substrate; via pyruvic acid. Ser190 is subject to Pyruvic acid (Ser); by autocatalysis.

Belongs to the phosphatidylserine decarboxylase family. PSD-A subfamily. Heterodimer of a large membrane-associated beta subunit and a small pyruvoyl-containing alpha subunit. The cofactor is pyruvate. Is synthesized initially as an inactive proenzyme. Formation of the active enzyme involves a self-maturation process in which the active site pyruvoyl group is generated from an internal serine residue via an autocatalytic post-translational modification. Two non-identical subunits are generated from the proenzyme in this reaction, and the pyruvate is formed at the N-terminus of the alpha chain, which is derived from the carboxyl end of the proenzyme. The post-translation cleavage follows an unusual pathway, termed non-hydrolytic serinolysis, in which the side chain hydroxyl group of the serine supplies its oxygen atom to form the C-terminus of the beta chain, while the remainder of the serine residue undergoes an oxidative deamination to produce ammonia and the pyruvoyl prosthetic group on the alpha chain.

The protein localises to the cell membrane. The enzyme catalyses a 1,2-diacyl-sn-glycero-3-phospho-L-serine + H(+) = a 1,2-diacyl-sn-glycero-3-phosphoethanolamine + CO2. The protein operates within phospholipid metabolism; phosphatidylethanolamine biosynthesis; phosphatidylethanolamine from CDP-diacylglycerol: step 2/2. In terms of biological role, catalyzes the formation of phosphatidylethanolamine (PtdEtn) from phosphatidylserine (PtdSer). The sequence is that of Phosphatidylserine decarboxylase proenzyme from Rhizobium leguminosarum bv. trifolii (strain WSM2304).